A 262-amino-acid chain; its full sequence is Acyl-[acyl-carrier-protein]--UDP-N-acetylglucosamine O-acyltransferase (262 aa).

Belongs to the transferase hexapeptide repeat family. LpxA subfamily. In terms of assembly, homotrimer.

It is found in the cytoplasm. It carries out the reaction a (3R)-hydroxyacyl-[ACP] + UDP-N-acetyl-alpha-D-glucosamine = a UDP-3-O-[(3R)-3-hydroxyacyl]-N-acetyl-alpha-D-glucosamine + holo-[ACP]. The protein operates within glycolipid biosynthesis; lipid IV(A) biosynthesis; lipid IV(A) from (3R)-3-hydroxytetradecanoyl-[acyl-carrier-protein] and UDP-N-acetyl-alpha-D-glucosamine: step 1/6. Functionally, involved in the biosynthesis of lipid A, a phosphorylated glycolipid that anchors the lipopolysaccharide to the outer membrane of the cell. This chain is Acyl-[acyl-carrier-protein]--UDP-N-acetylglucosamine O-acyltransferase, found in Yersinia pseudotuberculosis serotype O:1b (strain IP 31758).